Here is a 209-residue protein sequence, read N- to C-terminus: Large ribosomal subunit protein bL25 (209 aa).

It belongs to the bacterial ribosomal protein bL25 family. CTC subfamily. As to quaternary structure, part of the 50S ribosomal subunit; part of the 5S rRNA/L5/L18/L25 subcomplex. Contacts the 5S rRNA. Binds to the 5S rRNA independently of L5 and L18.

This is one of the proteins that binds to the 5S RNA in the ribosome where it forms part of the central protuberance. The sequence is that of Large ribosomal subunit protein bL25 from Chlorobium phaeobacteroides (strain BS1).